We begin with the raw amino-acid sequence, 395 residues long: MTIASSTASSEFLKNPYSFYDTLRAVHPIYKGSFLKYPGWYVTGYEETAAILKDARFKVRTPLPESSTKYQDLSHVQNQMMLFQNQPDHRRLRTLASGAFTPRTTESYQPYIIETVHHLLDQVQGKKKMEVISDFAFPLASFVIANIIGVPEEDREQLKEWAASLIQTIDFTRSRKALTEGNIMAVQAMAYFKELIQKRKRHPQQDMISMLLKGREKDKLTEEEAASTCILLAIAGHETTVNLISNSVLCLLQHPEQLLKLRENPDLIGTAVEECLRYESPTQMTARVASEDIDICGVTIRQGEQVYLLLGAANRDPSIFTNPDVFDITRSPNPHLSFGHGHHVCLGSSLARLEAQIAINTLLQRMPSLNLADFEWRYRPLFGFRALEELPVTFE.

Arg60 provides a ligand contact to substrate. Position 89-93 (89-93) interacts with heme; sequence HRRLR. 169–173 contacts substrate; sequence IDFTR. Cys250 and Cys275 are joined by a disulfide. 285–287 is a heme binding site; sequence TAR. A substrate-binding site is contributed by Tyr307. Residues 343-345 and Cys345 each bind heme; that span reads HVC.

It depends on heme as a cofactor.

The catalysed reaction is a C2-C8-saturated long-chain fatty acyl-[ACP] + 2 reduced [flavodoxin] + 3 O2 = 6-carboxyhexanoyl-[ACP] + a fatty aldehyde + 2 oxidized [flavodoxin] + 3 H2O + 3 H(+). It functions in the pathway cofactor biosynthesis; biotin biosynthesis. Its function is as follows. Catalyzes the C-C bond cleavage of fatty acid linked to acyl carrier protein (ACP) to generate pimelic acid for biotin biosynthesis. It has high affinity for long-chain fatty acids with the greatest affinity for myristic acid. This chain is Biotin biosynthesis cytochrome P450 (bioI), found in Bacillus subtilis (strain 168).